We begin with the raw amino-acid sequence, 475 residues long: LEC14B homolog (475 aa).

Positions Met1 to Asn34 are disordered. Polar residues predominate over residues Ser23–Ser33. WD repeat units follow at residues Asp211–Asp240, Ala252–Asp283, Gly299–Asp329, Gly375–Asp411, and His423–Glu453.

Belongs to the WD repeat LEC14B family.

The chain is LEC14B homolog from Prunus armeniaca (Apricot).